Here is a 319-residue protein sequence, read N- to C-terminus: Guanidinobutyrase (319 aa).

Mn(2+)-binding residues include His-129, Asp-152, His-154, Asp-156, Asp-243, and Asp-245.

Belongs to the arginase family. Agmatinase subfamily. Homohexamer. The cofactor is Mn(2+).

The enzyme catalyses 4-guanidinobutanoate + H2O = urea + 4-aminobutanoate. In terms of biological role, catalyzes specifically the hydrolysis of 4-guanidinobutanoate to 4-aminobutanoate and urea. Has no activity against arginine, agmatine, 3-guanidinopropionate and guanidinoacetate. The polypeptide is Guanidinobutyrase (gbuA) (Pseudomonas aeruginosa (strain ATCC 15692 / DSM 22644 / CIP 104116 / JCM 14847 / LMG 12228 / 1C / PRS 101 / PAO1)).